The following is a 152-amino-acid chain: Large ribosomal subunit protein bL21 (152 aa).

The segment at 115 to 152 (VTSISNGEKPKKATTSAKPNTKKPSTAVKSSKVEKTPE) is disordered. Residues 127-143 (ATTSAKPNTKKPSTAVK) are compositionally biased toward polar residues.

The protein belongs to the bacterial ribosomal protein bL21 family. As to quaternary structure, part of the 50S ribosomal subunit. Contacts protein L20.

In terms of biological role, this protein binds to 23S rRNA in the presence of protein L20. The protein is Large ribosomal subunit protein bL21 of Prochlorococcus marinus (strain SARG / CCMP1375 / SS120).